Here is a 267-residue protein sequence, read N- to C-terminus: Ribonuclease HII (267 aa).

Residues W57 to A245 form the RNase H type-2 domain. A divalent metal cation-binding residues include D63, E64, and D154.

The protein belongs to the RNase HII family. The cofactor is Mn(2+). Mg(2+) is required as a cofactor.

Its subcellular location is the cytoplasm. It carries out the reaction Endonucleolytic cleavage to 5'-phosphomonoester.. Its function is as follows. Endonuclease that specifically degrades the RNA of RNA-DNA hybrids. The protein is Ribonuclease HII of Nitrobacter hamburgensis (strain DSM 10229 / NCIMB 13809 / X14).